The chain runs to 331 residues: Phenylalanine--tRNA ligase alpha subunit (331 aa).

E254 contacts Mg(2+).

Belongs to the class-II aminoacyl-tRNA synthetase family. Phe-tRNA synthetase alpha subunit type 1 subfamily. In terms of assembly, tetramer of two alpha and two beta subunits. Requires Mg(2+) as cofactor.

It is found in the cytoplasm. The catalysed reaction is tRNA(Phe) + L-phenylalanine + ATP = L-phenylalanyl-tRNA(Phe) + AMP + diphosphate + H(+). The polypeptide is Phenylalanine--tRNA ligase alpha subunit (Blochmanniella pennsylvanica (strain BPEN)).